Here is an 842-residue protein sequence, read N- to C-terminus: Protein P (842 aa).

Residues 1–177 (MPLSYQHFRR…FCGSPYSWEQ (177 aa)) are terminal protein domain (TP). Residues 178–345 (ELHHGAFLDG…YCLTHLVNLL (168 aa)) form a spacer region. The tract at residues 186–273 (DGPSRMGEES…AKNIASRSAS (88 aa)) is disordered. Residues 223 to 239 (GPQSQQRPLDGSQQGRS) are compositionally biased toward polar residues. The tract at residues 346–689 (EDWGPCTEHG…YLNLYPVARQ (344 aa)) is polymerase/reverse transcriptase domain (RT). Residues 356-599 (RHHIRIPRTP…YSLNFMGYVI (244 aa)) form the Reverse transcriptase domain. Aspartate 428, aspartate 550, and aspartate 551 together coordinate Mg(2+).

Belongs to the hepadnaviridae P protein family.

The catalysed reaction is DNA(n) + a 2'-deoxyribonucleoside 5'-triphosphate = DNA(n+1) + diphosphate. It catalyses the reaction Endonucleolytic cleavage to 5'-phosphomonoester.. Its activity is regulated as follows. Activated by host HSP70 and HSP40 in vitro to be able to bind the epsilon loop of the pgRNA. Because deletion of the RNase H region renders the protein partly chaperone-independent, the chaperones may be needed indirectly to relieve occlusion of the RNA-binding site by this domain. Inhibited by several reverse-transcriptase inhibitors: Lamivudine, Adefovir and Entecavir. Multifunctional enzyme that converts the viral RNA genome into dsDNA in viral cytoplasmic capsids. This enzyme displays a DNA polymerase activity that can copy either DNA or RNA templates, and a ribonuclease H (RNase H) activity that cleaves the RNA strand of RNA-DNA heteroduplexes in a partially processive 3'- to 5'-endonucleasic mode. Neo-synthesized pregenomic RNA (pgRNA) are encapsidated together with the P protein, and reverse-transcribed inside the nucleocapsid. Initiation of reverse-transcription occurs first by binding the epsilon loop on the pgRNA genome, and is initiated by protein priming, thereby the 5'-end of (-)DNA is covalently linked to P protein. Partial (+)DNA is synthesized from the (-)DNA template and generates the relaxed circular DNA (RC-DNA) genome. After budding and infection, the RC-DNA migrates in the nucleus, and is converted into a plasmid-like covalently closed circular DNA (cccDNA). The activity of P protein does not seem to be necessary for cccDNA generation, and is presumably released from (+)DNA by host nuclear DNA repair machinery. This Homo sapiens (Human) protein is Protein P.